A 332-amino-acid chain; its full sequence is GTP 3',8-cyclase (332 aa).

The region spanning 7 to 221 is the Radical SAM core domain; it reads SYDRLHDYVR…FDTCKDNGLA (215 aa). Position 16 (Arg16) interacts with GTP. Residues Cys23 and Cys27 each contribute to the [4Fe-4S] cluster site. Tyr29 lines the S-adenosyl-L-methionine pocket. Residue Cys30 coordinates [4Fe-4S] cluster. Arg66 is a GTP binding site. An S-adenosyl-L-methionine-binding site is contributed by Gly70. Thr97 contacts GTP. Ser121 contacts S-adenosyl-L-methionine. Lys158 provides a ligand contact to GTP. An S-adenosyl-L-methionine-binding site is contributed by Met192. Residues Cys256 and Cys259 each contribute to the [4Fe-4S] cluster site. Residue 261–263 participates in GTP binding; that stretch reads RLR. A [4Fe-4S] cluster-binding site is contributed by Cys273.

The protein belongs to the radical SAM superfamily. MoaA family. In terms of assembly, monomer and homodimer. The cofactor is [4Fe-4S] cluster.

The enzyme catalyses GTP + AH2 + S-adenosyl-L-methionine = (8S)-3',8-cyclo-7,8-dihydroguanosine 5'-triphosphate + 5'-deoxyadenosine + L-methionine + A + H(+). It functions in the pathway cofactor biosynthesis; molybdopterin biosynthesis. Functionally, catalyzes the cyclization of GTP to (8S)-3',8-cyclo-7,8-dihydroguanosine 5'-triphosphate. This Lactiplantibacillus plantarum (strain ATCC BAA-793 / NCIMB 8826 / WCFS1) (Lactobacillus plantarum) protein is GTP 3',8-cyclase.